We begin with the raw amino-acid sequence, 223 residues long: Glycosylphosphatidylinositol anchor biosynthesis protein 11 (223 aa).

The next 6 membrane-spanning stretches (helical) occupy residues 25–45 (LAVV…SAGI), 52–72 (VMTQ…VVVL), 88–108 (MIAA…LVLF), 120–140 (FVCA…TYHL), 158–178 (VYAA…PIPY), and 189–209 (ITIL…GIAL).

Belongs to the PIGF family.

Its subcellular location is the endoplasmic reticulum membrane. It participates in glycolipid biosynthesis; glycosylphosphatidylinositol-anchor biosynthesis. Functionally, acts in the GPI biosynthetic pathway between GlcNAc-PI synthesis and GPI transfer to protein. The sequence is that of Glycosylphosphatidylinositol anchor biosynthesis protein 11 (GPI11) from Yarrowia lipolytica (strain CLIB 122 / E 150) (Yeast).